Here is a 220-residue protein sequence, read N- to C-terminus: Deoxyribose-phosphate aldolase (220 aa).

The active-site Proton donor/acceptor is the Asp89. The active-site Schiff-base intermediate with acetaldehyde is the Lys151. Lys180 functions as the Proton donor/acceptor in the catalytic mechanism.

It belongs to the DeoC/FbaB aldolase family. DeoC type 1 subfamily.

Its subcellular location is the cytoplasm. The catalysed reaction is 2-deoxy-D-ribose 5-phosphate = D-glyceraldehyde 3-phosphate + acetaldehyde. The protein operates within carbohydrate degradation; 2-deoxy-D-ribose 1-phosphate degradation; D-glyceraldehyde 3-phosphate and acetaldehyde from 2-deoxy-alpha-D-ribose 1-phosphate: step 2/2. Catalyzes a reversible aldol reaction between acetaldehyde and D-glyceraldehyde 3-phosphate to generate 2-deoxy-D-ribose 5-phosphate. The polypeptide is Deoxyribose-phosphate aldolase (Deinococcus radiodurans (strain ATCC 13939 / DSM 20539 / JCM 16871 / CCUG 27074 / LMG 4051 / NBRC 15346 / NCIMB 9279 / VKM B-1422 / R1)).